The chain runs to 432 residues: Histidinol dehydrogenase (432 aa).

The NAD(+) site is built by Y133, Q194, and N217. S240, Q262, and H265 together coordinate substrate. Zn(2+)-binding residues include Q262 and H265. Residues E330 and H331 each act as proton acceptor in the active site. Residues H331, D364, E418, and H423 each contribute to the substrate site. D364 serves as a coordination point for Zn(2+). H423 contributes to the Zn(2+) binding site.

It belongs to the histidinol dehydrogenase family. The cofactor is Zn(2+).

The catalysed reaction is L-histidinol + 2 NAD(+) + H2O = L-histidine + 2 NADH + 3 H(+). Its pathway is amino-acid biosynthesis; L-histidine biosynthesis; L-histidine from 5-phospho-alpha-D-ribose 1-diphosphate: step 9/9. Functionally, catalyzes the sequential NAD-dependent oxidations of L-histidinol to L-histidinaldehyde and then to L-histidine. This is Histidinol dehydrogenase from Nitrosomonas europaea (strain ATCC 19718 / CIP 103999 / KCTC 2705 / NBRC 14298).